Consider the following 163-residue polypeptide: Nucleotide-binding protein NTHI1194 (163 aa).

The protein belongs to the YajQ family.

Nucleotide-binding protein. The sequence is that of Nucleotide-binding protein NTHI1194 from Haemophilus influenzae (strain 86-028NP).